The following is a 115-amino-acid chain: Ribonuclease P protein component (115 aa).

This sequence belongs to the RnpA family. Consists of a catalytic RNA component (M1 or rnpB) and a protein subunit.

The enzyme catalyses Endonucleolytic cleavage of RNA, removing 5'-extranucleotides from tRNA precursor.. Functionally, RNaseP catalyzes the removal of the 5'-leader sequence from pre-tRNA to produce the mature 5'-terminus. It can also cleave other RNA substrates such as 4.5S RNA. The protein component plays an auxiliary but essential role in vivo by binding to the 5'-leader sequence and broadening the substrate specificity of the ribozyme. The chain is Ribonuclease P protein component from Natranaerobius thermophilus (strain ATCC BAA-1301 / DSM 18059 / JW/NM-WN-LF).